A 329-amino-acid polypeptide reads, in one-letter code: Ubiquinol oxidase 1c, mitochondrial (329 aa).

Residues 1-45 constitute a mitochondrion transit peptide; that stretch reads MITTLLRRSLLDASKQATSINGILFHQLAPAKYFRVPAVGGLRDF. A helical transmembrane segment spans residues 154–174; sequence AIMLETVAAVPGMVGGMLMHF. Fe cation contacts are provided by E158, E197, and H200. Residues 216–236 form a helical membrane-spanning segment; the sequence is ALVISVQGVFFNAYLIGYIIS. 3 residues coordinate Fe cation: E248, E299, and H302.

It belongs to the alternative oxidase family. Homodimer; disulfide-linked. It depends on Fe cation as a cofactor. As to expression, expressed in roots, stems, leaves, cotyledons and flowers. High expression in stamens.

It localises to the mitochondrion inner membrane. It catalyses the reaction 2 a ubiquinol + O2 = 2 a ubiquinone + 2 H2O. Functionally, catalyzes the cyanide-resistant oxidation of ubiquinol and the reduction of molecular oxygen to water, but does not translocate protons and consequently is not linked to oxidative phosphorylation. May increase respiration when the cytochrome respiratory pathway is restricted, or in response to low temperatures. The protein is Ubiquinol oxidase 1c, mitochondrial (AOX1C) of Arabidopsis thaliana (Mouse-ear cress).